The sequence spans 154 residues: SsrA-binding protein (154 aa).

It belongs to the SmpB family.

It localises to the cytoplasm. In terms of biological role, required for rescue of stalled ribosomes mediated by trans-translation. Binds to transfer-messenger RNA (tmRNA), required for stable association of tmRNA with ribosomes. tmRNA and SmpB together mimic tRNA shape, replacing the anticodon stem-loop with SmpB. tmRNA is encoded by the ssrA gene; the 2 termini fold to resemble tRNA(Ala) and it encodes a 'tag peptide', a short internal open reading frame. During trans-translation Ala-aminoacylated tmRNA acts like a tRNA, entering the A-site of stalled ribosomes, displacing the stalled mRNA. The ribosome then switches to translate the ORF on the tmRNA; the nascent peptide is terminated with the 'tag peptide' encoded by the tmRNA and targeted for degradation. The ribosome is freed to recommence translation, which seems to be the essential function of trans-translation. The sequence is that of SsrA-binding protein from Staphylococcus aureus (strain Mu3 / ATCC 700698).